Consider the following 992-residue polypeptide: Aminopeptidase Q (992 aa).

The Cytoplasmic segment spans residues 2-13 (GPPSSSGFYVSR). Residues 14 to 34 (AVALLLAALAAALLLALAVLA) form a helical; Signal-anchor for type II membrane protein membrane-spanning segment. Residues 35-992 (ALYGRCARVQ…RMTAWLRKNT (958 aa)) are Extracellular-facing. Residues 47–92 (DLHHSGVPDAASSPRGTQEEPLPTWPPRPTREPAGTATPGHWRPPG) form a disordered region. A glycan (N-linked (GlcNAc...) asparagine) is linked at asparagine 133. Glutamate 241 provides a ligand contact to substrate. N-linked (GlcNAc...) asparagine glycosylation is found at asparagine 262, asparagine 289, asparagine 347, and asparagine 361. 380 to 384 (SAMEN) serves as a coordination point for substrate. Residue histidine 416 coordinates Zn(2+). Catalysis depends on glutamate 417, which acts as the Proton acceptor. Zn(2+) contacts are provided by histidine 420 and glutamate 439. Tyrosine 505 functions as the Proton donor in the catalytic mechanism. N-linked (GlcNAc...) asparagine glycans are attached at residues asparagine 555, asparagine 584, asparagine 602, asparagine 609, asparagine 655, asparagine 811, asparagine 850, and asparagine 889.

It belongs to the peptidase M1 family. Zn(2+) is required as a cofactor. Expressed in skin. Expression levels do not differ between dark and light skin areas.

The protein resides in the membrane. Metalloprotease which may be important for placentation by regulating biological activity of key peptides at the embryo-maternal interface. Involved in coat pigmentation patterns. During skin development, may be required to establish the periodicity of tabby markings, initiating a pre-pattern at or before hair follicle development. The chain is Aminopeptidase Q (LVRN) from Felis catus (Cat).